Reading from the N-terminus, the 65-residue chain is Large ribosomal subunit protein bL35 (65 aa).

Belongs to the bacterial ribosomal protein bL35 family.

The protein is Large ribosomal subunit protein bL35 of Oleidesulfovibrio alaskensis (strain ATCC BAA-1058 / DSM 17464 / G20) (Desulfovibrio alaskensis).